The chain runs to 717 residues: Catalase-peroxidase (717 aa).

Positions 1–20 (MSGKCPVMHGGNTSTGTSNK) are disordered. Polar residues predominate over residues 11 to 20 (GNTSTGTSNK). Residues 91-219 (WHSAGSYRLA…LAAVQMGLIY (129 aa)) constitute a cross-link (tryptophyl-tyrosyl-methioninium (Trp-Tyr) (with M-245)). Histidine 92 serves as the catalytic Proton acceptor. Positions 219-245 (YVNPEGVNGQPDPQKTAEQVRETFARM) form a cross-link, tryptophyl-tyrosyl-methioninium (Tyr-Met) (with W-91). Histidine 260 contributes to the heme b binding site.

Belongs to the peroxidase family. Peroxidase/catalase subfamily. As to quaternary structure, homodimer or homotetramer. Requires heme b as cofactor. Formation of the three residue Trp-Tyr-Met cross-link is important for the catalase, but not the peroxidase activity of the enzyme.

The enzyme catalyses H2O2 + AH2 = A + 2 H2O. The catalysed reaction is 2 H2O2 = O2 + 2 H2O. Bifunctional enzyme with both catalase and broad-spectrum peroxidase activity. This Chromohalobacter salexigens (strain ATCC BAA-138 / DSM 3043 / CIP 106854 / NCIMB 13768 / 1H11) protein is Catalase-peroxidase.